The chain runs to 275 residues: 2,3,4,5-tetrahydropyridine-2,6-dicarboxylate N-succinyltransferase (275 aa).

The substrate site is built by Arg106 and Asp143.

The protein belongs to the transferase hexapeptide repeat family. As to quaternary structure, homotrimer.

Its subcellular location is the cytoplasm. The enzyme catalyses (S)-2,3,4,5-tetrahydrodipicolinate + succinyl-CoA + H2O = (S)-2-succinylamino-6-oxoheptanedioate + CoA. The protein operates within amino-acid biosynthesis; L-lysine biosynthesis via DAP pathway; LL-2,6-diaminopimelate from (S)-tetrahydrodipicolinate (succinylase route): step 1/3. In Ralstonia nicotianae (strain ATCC BAA-1114 / GMI1000) (Ralstonia solanacearum), this protein is 2,3,4,5-tetrahydropyridine-2,6-dicarboxylate N-succinyltransferase.